The following is a 198-amino-acid chain: Ribonuclease HII (198 aa).

The 189-residue stretch at 10–198 (QLVAGVDEVG…PVKRALGLAS (189 aa)) folds into the RNase H type-2 domain. Asp-16, Glu-17, and Asp-108 together coordinate a divalent metal cation.

The protein belongs to the RNase HII family. Requires Mn(2+) as cofactor. The cofactor is Mg(2+).

The protein localises to the cytoplasm. It catalyses the reaction Endonucleolytic cleavage to 5'-phosphomonoester.. Functionally, endonuclease that specifically degrades the RNA of RNA-DNA hybrids. In Escherichia fergusonii (strain ATCC 35469 / DSM 13698 / CCUG 18766 / IAM 14443 / JCM 21226 / LMG 7866 / NBRC 102419 / NCTC 12128 / CDC 0568-73), this protein is Ribonuclease HII.